Reading from the N-terminus, the 295-residue chain is GTPase Era (295 aa).

One can recognise an Era-type G domain in the interval 7-176 (KTISVCIIGR…IKSKAKVSPW (170 aa)). The interval 15-22 (GRPNSGKS) is G1. 15–22 (GRPNSGKS) provides a ligand contact to GTP. Residues 41-45 (QTTRS) form a G2 region. Positions 62–65 (DTPG) are G3. GTP contacts are provided by residues 62-66 (DTPGI) and 124-127 (NKID). The G4 stretch occupies residues 124 to 127 (NKID). The tract at residues 152–154 (ISA) is G5. The 78-residue stretch at 204–281 (LQQELPYKLT…HLFLFVKVHA (78 aa)) folds into the KH type-2 domain.

Belongs to the TRAFAC class TrmE-Era-EngA-EngB-Septin-like GTPase superfamily. Era GTPase family. Monomer.

It is found in the cytoplasm. It localises to the cell inner membrane. An essential GTPase that binds both GDP and GTP, with rapid nucleotide exchange. Plays a role in 16S rRNA processing and 30S ribosomal subunit biogenesis and possibly also in cell cycle regulation and energy metabolism. The sequence is that of GTPase Era from Rickettsia typhi (strain ATCC VR-144 / Wilmington).